An 876-amino-acid polypeptide reads, in one-letter code: Alanine--tRNA ligase (876 aa).

4 residues coordinate Zn(2+): His565, His569, Cys667, and His671.

It belongs to the class-II aminoacyl-tRNA synthetase family. The cofactor is Zn(2+).

The protein resides in the cytoplasm. It catalyses the reaction tRNA(Ala) + L-alanine + ATP = L-alanyl-tRNA(Ala) + AMP + diphosphate. Functionally, catalyzes the attachment of alanine to tRNA(Ala) in a two-step reaction: alanine is first activated by ATP to form Ala-AMP and then transferred to the acceptor end of tRNA(Ala). Also edits incorrectly charged Ser-tRNA(Ala) and Gly-tRNA(Ala) via its editing domain. The chain is Alanine--tRNA ligase from Staphylococcus saprophyticus subsp. saprophyticus (strain ATCC 15305 / DSM 20229 / NCIMB 8711 / NCTC 7292 / S-41).